Reading from the N-terminus, the 270-residue chain is uncharacterized protein (270 aa).

This sequence to T.pallidum TP_0127, TP_0315 and TP_0618.

This is an uncharacterized protein from Treponema pallidum (strain Nichols).